The following is a 132-amino-acid chain: Small ribosomal subunit protein uS8 (132 aa).

This sequence belongs to the universal ribosomal protein uS8 family. In terms of assembly, part of the 30S ribosomal subunit. Contacts proteins S5 and S12.

One of the primary rRNA binding proteins, it binds directly to 16S rRNA central domain where it helps coordinate assembly of the platform of the 30S subunit. This Xanthomonas oryzae pv. oryzae (strain MAFF 311018) protein is Small ribosomal subunit protein uS8.